The primary structure comprises 354 residues: Histidinol-phosphate aminotransferase (354 aa).

The span at 1–11 (MKSFLSDKAKS) shows a compositional bias: basic and acidic residues. Positions 1–33 (MKSFLSDKAKSIEPYTPGEQPKDKNYIKLNTNE) are disordered. Lys-211 is modified (N6-(pyridoxal phosphate)lysine).

This sequence belongs to the class-II pyridoxal-phosphate-dependent aminotransferase family. Histidinol-phosphate aminotransferase subfamily. In terms of assembly, homodimer. Pyridoxal 5'-phosphate serves as cofactor.

It carries out the reaction L-histidinol phosphate + 2-oxoglutarate = 3-(imidazol-4-yl)-2-oxopropyl phosphate + L-glutamate. It participates in amino-acid biosynthesis; L-histidine biosynthesis; L-histidine from 5-phospho-alpha-D-ribose 1-diphosphate: step 7/9. In Brachyspira hyodysenteriae (strain ATCC 49526 / WA1), this protein is Histidinol-phosphate aminotransferase.